The sequence spans 292 residues: Putative rRNA 2'-O-methyltransferase fibrillarin 3 (292 aa).

The segment at 1 to 58 is disordered; it reads MKPPQRGRGGGVRGGRGLARGGEGSAVRGSGRGGESGRGRGPGRVKSESDGGIKGGSK. Over residues 7–42 the composition is skewed to gly residues; sequence GRGGGVRGGRGLARGGEGSAVRGSGRGGESGRGRGP. S-adenosyl-L-methionine contacts are provided by residues 146–147, 165–166, 190–191, and 210–213; these read YT, EH, DA, and DVNH.

Belongs to the methyltransferase superfamily. Fibrillarin family. Component of box C/D small nucleolar ribonucleoprotein (snoRNP) particles. Not detectable by RT-PCR.

It localises to the nucleus. The protein localises to the nucleolus. It carries out the reaction L-glutaminyl-[histone H2A] + S-adenosyl-L-methionine = N(5)-methyl-L-glutaminyl-[histone H2A] + S-adenosyl-L-homocysteine + H(+). Its function is as follows. S-adenosyl-L-methionine-dependent methyltransferase that has the ability to methylate both RNAs and proteins. Involved in pre-rRNA processing. Utilizes the methyl donor S-adenosyl-L-methionine to catalyze the site-specific 2'-hydroxyl methylation of ribose moieties in pre-ribosomal RNA. Site specificity is provided by a guide RNA that base pairs with the substrate. Methylation occurs at a characteristic distance from the sequence involved in base pairing with the guide RNA. Also acts as a protein methyltransferase by mediating methylation of 'Gln-105' of histone H2A (H2AQ105me), a modification that impairs binding of the FACT complex and is specifically present at 35S ribosomal DNA locus. In Arabidopsis thaliana (Mouse-ear cress), this protein is Putative rRNA 2'-O-methyltransferase fibrillarin 3 (FIB3).